Consider the following 363-residue polypeptide: Probable tRNA pseudouridine synthase D (363 aa).

The active-site Nucleophile is D82. The 213-residue stretch at 151–363 (YLPAYIGYQR…IARTDPRLFT (213 aa)) folds into the TRUD domain.

This sequence belongs to the pseudouridine synthase TruD family.

The catalysed reaction is uridine(13) in tRNA = pseudouridine(13) in tRNA. In terms of biological role, could be responsible for synthesis of pseudouridine from uracil-13 in transfer RNAs. This is Probable tRNA pseudouridine synthase D from Sulfurisphaera tokodaii (strain DSM 16993 / JCM 10545 / NBRC 100140 / 7) (Sulfolobus tokodaii).